Reading from the N-terminus, the 150-residue chain is Aspartate 1-decarboxylase 1 (150 aa).

Serine 24 serves as the catalytic Schiff-base intermediate with substrate; via pyruvic acid. Position 24 is a pyruvic acid (Ser) (serine 24). Residue threonine 56 participates in substrate binding. The Proton donor role is filled by tyrosine 57. 72-74 (GAA) provides a ligand contact to substrate.

Belongs to the PanD family. Heterooctamer of four alpha and four beta subunits. Requires pyruvate as cofactor. In terms of processing, is synthesized initially as an inactive proenzyme, which is activated by self-cleavage at a specific serine bond to produce a beta-subunit with a hydroxyl group at its C-terminus and an alpha-subunit with a pyruvoyl group at its N-terminus.

It localises to the cytoplasm. It carries out the reaction L-aspartate + H(+) = beta-alanine + CO2. It participates in cofactor biosynthesis; (R)-pantothenate biosynthesis; beta-alanine from L-aspartate: step 1/1. Functionally, catalyzes the pyruvoyl-dependent decarboxylation of aspartate to produce beta-alanine. The protein is Aspartate 1-decarboxylase 1 of Mesorhizobium japonicum (strain LMG 29417 / CECT 9101 / MAFF 303099) (Mesorhizobium loti (strain MAFF 303099)).